Here is a 493-residue protein sequence, read N- to C-terminus: Galactose-1-phosphate uridylyltransferase (493 aa).

The protein belongs to the galactose-1-phosphate uridylyltransferase type 2 family.

Its subcellular location is the cytoplasm. It catalyses the reaction alpha-D-galactose 1-phosphate + UDP-alpha-D-glucose = alpha-D-glucose 1-phosphate + UDP-alpha-D-galactose. The protein operates within carbohydrate metabolism; galactose metabolism. This is Galactose-1-phosphate uridylyltransferase from Streptococcus pneumoniae serotype 19F (strain G54).